An 82-amino-acid polypeptide reads, in one-letter code: Putative antimicrobial peptide 7848 (82 aa).

Positions 1–17 (MNENLWAAPAPKKLSKH) are cleaved as a signal peptide. Residues 16–60 (KHFFGRGGPLGKETGPNLFPKKPGAGKGLGFPPTKKPRGQPRVLK) form a disordered region. Positions 38 to 82 (PGAGKGLGFPPTKKPRGQPRVLKKPKWNSEGLIGILHRGSDGVQF) are excised as a propeptide. A compositionally biased stretch (basic residues) spans 50-60 (KKPRGQPRVLK).

Belongs to the non-disulfide-bridged peptide (NDBP) superfamily. Short antimicrobial peptide (group 4) family. Expressed by the venom gland.

It is found in the secreted. This is Putative antimicrobial peptide 7848 from Urodacus yaschenkoi (Inland robust scorpion).